The sequence spans 180 residues: ATP synthase subunit delta 2 (180 aa).

This sequence belongs to the ATPase delta chain family. As to quaternary structure, F-type ATPases have 2 components, F(1) - the catalytic core - and F(0) - the membrane proton channel. F(1) has five subunits: alpha(3), beta(3), gamma(1), delta(1), epsilon(1). F(0) has three main subunits: a(1), b(2) and c(10-14). The alpha and beta chains form an alternating ring which encloses part of the gamma chain. F(1) is attached to F(0) by a central stalk formed by the gamma and epsilon chains, while a peripheral stalk is formed by the delta and b chains.

It localises to the cell inner membrane. Functionally, f(1)F(0) ATP synthase produces ATP from ADP in the presence of a proton or sodium gradient. F-type ATPases consist of two structural domains, F(1) containing the extramembraneous catalytic core and F(0) containing the membrane proton channel, linked together by a central stalk and a peripheral stalk. During catalysis, ATP synthesis in the catalytic domain of F(1) is coupled via a rotary mechanism of the central stalk subunits to proton translocation. Its function is as follows. This protein is part of the stalk that links CF(0) to CF(1). It either transmits conformational changes from CF(0) to CF(1) or is implicated in proton conduction. In Vibrio campbellii (strain ATCC BAA-1116), this protein is ATP synthase subunit delta 2.